The chain runs to 241 residues: MATIASEYSSEASNTPIEHQFNPYGDNGGTILGIAGEDFAVLAGDTRNITDYSINSRYEPKVFDCGDNIVMSANGFAADGDALVKRFKNSVKWYHFDHNDKKLSINSAARNIQHLLYGKRFFPYYVHTIIAGLDEDGKGAVYSFDPVGSYEREQCRAGGAAASLIMPFLDNQVNFKNQYEPGTNGKVKKPLKYLSVEEVIKLVRDSFTSATERHIQVGDGLEILIVTKDGVRKEFYELKRD.

The propeptide occupies 1 to 19 (MATIASEYSSEASNTPIEH).

Belongs to the peptidase T1B family. As to quaternary structure, the 26S proteasome consists of a 20S proteasome core and two 19S regulatory subunits. The 20S proteasome core is composed of 28 subunits that are arranged in four stacked rings, resulting in a barrel-shaped structure. The two end rings are each formed by seven alpha subunits, and the two central rings are each formed by seven beta subunits. The catalytic chamber with the active sites is on the inside of the barrel.

It localises to the cytoplasm. The protein localises to the nucleus. Its function is as follows. Non-catalytic component of the proteasome which degrades poly-ubiquitinated proteins in the cytoplasm and in the nucleus. It is essential for the regulated turnover of proteins and for the removal of misfolded proteins. The proteasome is a multicatalytic proteinase complex that is characterized by its ability to cleave peptides with Arg, Phe, Tyr, Leu, and Glu adjacent to the leaving group at neutral or slightly basic pH. It has an ATP-dependent proteolytic activity. The chain is Proteasome subunit beta type-6 (PRE7) from Saccharomyces cerevisiae (strain ATCC 204508 / S288c) (Baker's yeast).